The sequence spans 233 residues: Small ribosomal subunit protein uS2 (233 aa).

The protein belongs to the universal ribosomal protein uS2 family.

The chain is Small ribosomal subunit protein uS2 from Bacillus cereus (strain G9842).